The sequence spans 65 residues: Large ribosomal subunit protein bL35 (65 aa).

The protein belongs to the bacterial ribosomal protein bL35 family.

This chain is Large ribosomal subunit protein bL35, found in Phytoplasma mali (strain AT).